A 512-amino-acid polypeptide reads, in one-letter code: GMP synthase [glutamine-hydrolyzing] (512 aa).

A Glutamine amidotransferase type-1 domain is found at 7–197 (TIIVLDFGSQ…VFGVCGCSEG (191 aa)). Cysteine 84 serves as the catalytic Nucleophile. Residues histidine 171 and glutamate 173 contribute to the active site. A GMPS ATP-PPase domain is found at 198-387 (WNMENFIEVE…LGIPDEIVWR (190 aa)). Position 225 to 231 (225 to 231 (SGGVDSS)) interacts with ATP.

As to quaternary structure, homodimer.

The catalysed reaction is XMP + L-glutamine + ATP + H2O = GMP + L-glutamate + AMP + diphosphate + 2 H(+). It functions in the pathway purine metabolism; GMP biosynthesis; GMP from XMP (L-Gln route): step 1/1. Functionally, catalyzes the synthesis of GMP from XMP. The sequence is that of GMP synthase [glutamine-hydrolyzing] from Bacillus mycoides (strain KBAB4) (Bacillus weihenstephanensis).